Reading from the N-terminus, the 304-residue chain is uncharacterized protein (304 aa).

It belongs to the histone deacetylase family.

Functionally, putative deacetylase. This is an uncharacterized protein from Synechocystis sp. (strain ATCC 27184 / PCC 6803 / Kazusa).